The chain runs to 528 residues: Alpha-amylase (528 aa).

Residues 1-28 (MNKKWLNIPALIALLAAIAFGSVAPAEA) form the signal peptide. Residues N168 and D228 each coordinate Ca(2+). Catalysis depends on D258, which acts as the Nucleophile. Position 262 (H262) interacts with Ca(2+). E286 acts as the Proton donor in catalysis.

This sequence belongs to the glycosyl hydrolase 13 family. Monomer. Requires Ca(2+) as cofactor.

It catalyses the reaction Endohydrolysis of (1-&gt;4)-alpha-D-glucosidic linkages in polysaccharides containing three or more (1-&gt;4)-alpha-linked D-glucose units.. This Niallia circulans (Bacillus circulans) protein is Alpha-amylase.